A 293-amino-acid chain; its full sequence is Rhomboid-like protease 1 (293 aa).

Residues 18–40 form a disordered region; the sequence is EHTPLYNAETGSRDSDSTSSGGA. A run of 6 helical transmembrane segments spans residues 62-82, 112-132, 148-168, 174-194, 217-237, and 262-282; these read VVLA…CLDT, LLLP…VFFQ, FTGL…TAFF, VGAS…MALT, LLMF…GGLL, and AAAI…LYAV. S177 serves as the catalytic Nucleophile. H232 is a catalytic residue.

Belongs to the peptidase S54 family.

The protein localises to the cytoplasmic vesicle. The protein resides in the secretory vesicle. It is found in the microneme membrane. The enzyme catalyses Cleaves type-1 transmembrane domains using a catalytic dyad composed of serine and histidine that are contributed by different transmembrane domains.. Serine protease involved in intramembrane proteolysis and the subsequent release of polypeptides from their membrane anchors. Has no detectable activity towards MIC2. This Toxoplasma gondii protein is Rhomboid-like protease 1 (ROM1).